Consider the following 507-residue polypeptide: Histidine ammonia-lyase (507 aa).

A cross-link (5-imidazolinone (Ala-Gly)) is located at residues Ala-141–Gly-143. 2,3-didehydroalanine (Ser) is present on Ser-142.

Belongs to the PAL/histidase family. Contains an active site 4-methylidene-imidazol-5-one (MIO), which is formed autocatalytically by cyclization and dehydration of residues Ala-Ser-Gly.

It localises to the cytoplasm. It carries out the reaction L-histidine = trans-urocanate + NH4(+). It functions in the pathway amino-acid degradation; L-histidine degradation into L-glutamate; N-formimidoyl-L-glutamate from L-histidine: step 1/3. The protein is Histidine ammonia-lyase of Burkholderia ambifaria (strain MC40-6).